A 485-amino-acid chain; its full sequence is Inosine-5'-monophosphate dehydrogenase (485 aa).

2 consecutive CBS domains span residues 97 to 154 (IIRD…VSDV) and 155 to 211 (MVRD…PDAS). Residues aspartate 246 and 295–297 (GIG) each bind NAD(+). K(+) contacts are provided by glycine 297 and glycine 299. Serine 300 provides a ligand contact to IMP. Cysteine 302 contributes to the K(+) binding site. Catalysis depends on cysteine 302, which acts as the Thioimidate intermediate. IMP-binding positions include 335–337 (DGG), 358–359 (GS), and 382–386 (YRGMG). Arginine 398 acts as the Proton acceptor in catalysis. Glutamate 409 contacts IMP. K(+) contacts are provided by glutamate 463, serine 464, and histidine 465.

Belongs to the IMPDH/GMPR family. Homotetramer. The cofactor is K(+).

The enzyme catalyses IMP + NAD(+) + H2O = XMP + NADH + H(+). It functions in the pathway purine metabolism; XMP biosynthesis via de novo pathway; XMP from IMP: step 1/1. Its activity is regulated as follows. Mycophenolic acid (MPA) is a non-competitive inhibitor that prevents formation of the closed enzyme conformation by binding to the same site as the amobile flap. In contrast, mizoribine monophosphate (MZP) is a competitive inhibitor that induces the closed conformation. MPA is a potent inhibitor of mammalian IMPDHs but a poor inhibitor of the bacterial enzymes. MZP is a more potent inhibitor of bacterial IMPDH. Functionally, catalyzes the conversion of inosine 5'-phosphate (IMP) to xanthosine 5'-phosphate (XMP), the first committed and rate-limiting step in the de novo synthesis of guanine nucleotides, and therefore plays an important role in the regulation of cell growth. The chain is Inosine-5'-monophosphate dehydrogenase from Thermoplasma acidophilum (strain ATCC 25905 / DSM 1728 / JCM 9062 / NBRC 15155 / AMRC-C165).